A 1085-amino-acid polypeptide reads, in one-letter code: Carbamoyl phosphate synthase large chain (1085 aa).

Residues Met1–Glu399 form a carboxyphosphate synthetic domain region. ATP-binding residues include Arg127, Arg167, Gly174, Glu206, Leu208, Glu213, Gly239, Val240, His241, Gln283, and Glu297. Residues Lys131–Val326 enclose the ATP-grasp 1 domain. Mg(2+)-binding residues include Gln283, Glu297, and Asn299. Residues Gln283, Glu297, and Asn299 each coordinate Mn(2+). Residues Asn400–Asn552 form an oligomerization domain region. The carbamoyl phosphate synthetic domain stretch occupies residues Lys553 to Phe951. The ATP-grasp 2 domain maps to Ser678–Val871. 10 residues coordinate ATP: Arg714, Lys756, Leu758, Glu763, Gly788, Ile789, His790, Ser791, Gln830, and Glu842. Mg(2+)-binding residues include Gln830, Glu842, and Asn844. Mn(2+) contacts are provided by Gln830, Glu842, and Asn844. The MGS-like domain maps to Asn952–Lys1085. The segment at Asn952–Lys1085 is allosteric domain.

This sequence belongs to the CarB family. Composed of two chains; the small (or glutamine) chain promotes the hydrolysis of glutamine to ammonia, which is used by the large (or ammonia) chain to synthesize carbamoyl phosphate. Tetramer of heterodimers (alpha,beta)4. It depends on Mg(2+) as a cofactor. Requires Mn(2+) as cofactor.

It carries out the reaction hydrogencarbonate + L-glutamine + 2 ATP + H2O = carbamoyl phosphate + L-glutamate + 2 ADP + phosphate + 2 H(+). The catalysed reaction is hydrogencarbonate + NH4(+) + 2 ATP = carbamoyl phosphate + 2 ADP + phosphate + 2 H(+). Its pathway is amino-acid biosynthesis; L-arginine biosynthesis; carbamoyl phosphate from bicarbonate: step 1/1. The protein operates within pyrimidine metabolism; UMP biosynthesis via de novo pathway; (S)-dihydroorotate from bicarbonate: step 1/3. Large subunit of the glutamine-dependent carbamoyl phosphate synthetase (CPSase). CPSase catalyzes the formation of carbamoyl phosphate from the ammonia moiety of glutamine, carbonate, and phosphate donated by ATP, constituting the first step of 2 biosynthetic pathways, one leading to arginine and/or urea and the other to pyrimidine nucleotides. The large subunit (synthetase) binds the substrates ammonia (free or transferred from glutamine from the small subunit), hydrogencarbonate and ATP and carries out an ATP-coupled ligase reaction, activating hydrogencarbonate by forming carboxy phosphate which reacts with ammonia to form carbamoyl phosphate. This is Carbamoyl phosphate synthase large chain from Helicobacter pylori (strain ATCC 700392 / 26695) (Campylobacter pylori).